We begin with the raw amino-acid sequence, 310 residues long: Methionyl-tRNA formyltransferase (310 aa).

111–114 provides a ligand contact to (6S)-5,6,7,8-tetrahydrofolate; that stretch reads SLLP.

Belongs to the Fmt family.

The enzyme catalyses L-methionyl-tRNA(fMet) + (6R)-10-formyltetrahydrofolate = N-formyl-L-methionyl-tRNA(fMet) + (6S)-5,6,7,8-tetrahydrofolate + H(+). Functionally, attaches a formyl group to the free amino group of methionyl-tRNA(fMet). The formyl group appears to play a dual role in the initiator identity of N-formylmethionyl-tRNA by promoting its recognition by IF2 and preventing the misappropriation of this tRNA by the elongation apparatus. The sequence is that of Methionyl-tRNA formyltransferase from Rhodopseudomonas palustris (strain BisB18).